We begin with the raw amino-acid sequence, 177 residues long: Adenine phosphoribosyltransferase (177 aa).

Belongs to the purine/pyrimidine phosphoribosyltransferase family. Homodimer.

The protein resides in the cytoplasm. It catalyses the reaction AMP + diphosphate = 5-phospho-alpha-D-ribose 1-diphosphate + adenine. Its pathway is purine metabolism; AMP biosynthesis via salvage pathway; AMP from adenine: step 1/1. Its function is as follows. Catalyzes a salvage reaction resulting in the formation of AMP, that is energically less costly than de novo synthesis. The sequence is that of Adenine phosphoribosyltransferase from Leptospira interrogans serogroup Icterohaemorrhagiae serovar copenhageni (strain Fiocruz L1-130).